Consider the following 385-residue polypeptide: tRNA-specific 2-thiouridylase MnmA (385 aa).

Residues alanine 18–serine 25 and leucine 44 contribute to the ATP site. The active-site Nucleophile is the cysteine 112. Cysteine 112 and cysteine 209 are disulfide-bonded. Position 136 (glycine 136) interacts with ATP. The interaction with tRNA stretch occupies residues arginine 159 to glutamine 161. The active-site Cysteine persulfide intermediate is cysteine 209.

Belongs to the MnmA/TRMU family.

It localises to the cytoplasm. It catalyses the reaction S-sulfanyl-L-cysteinyl-[protein] + uridine(34) in tRNA + AH2 + ATP = 2-thiouridine(34) in tRNA + L-cysteinyl-[protein] + A + AMP + diphosphate + H(+). In terms of biological role, catalyzes the 2-thiolation of uridine at the wobble position (U34) of tRNA, leading to the formation of s(2)U34. The polypeptide is tRNA-specific 2-thiouridylase MnmA (Methylorubrum extorquens (strain PA1) (Methylobacterium extorquens)).